Consider the following 108-residue polypeptide: Parvalbumin beta (108 aa).

EF-hand domains lie at 38–73 (KPTD…FCSS) and 77–108 (LSNA…LVRS). Positions 51, 53, 55, 57, 59, 62, 90, 92, 94, 96, and 101 each coordinate Ca(2+).

This sequence belongs to the parvalbumin family.

Functionally, in muscle, parvalbumin is thought to be involved in relaxation after contraction. It binds two calcium ions. This is Parvalbumin beta from Amphiuma means (Salamander).